The chain runs to 519 residues: Maturase K (519 aa).

Belongs to the intron maturase 2 family. MatK subfamily.

It localises to the plastid. Its subcellular location is the chloroplast. In terms of biological role, usually encoded in the trnK tRNA gene intron. Probably assists in splicing its own and other chloroplast group II introns. The protein is Maturase K of Dioscorea elephantipes (Elephant's foot yam).